Consider the following 179-residue polypeptide: NADH dehydrogenase [ubiquinone] 1 beta subcomplex subunit 9 (179 aa).

The residue at position 2 (alanine 2) is an N-acetylalanine. Position 85 is a phosphoserine (serine 85). The segment at 136-162 is disordered; it reads EVKQLQEETPPGGPLTEALPPARKEGD.

It belongs to the complex I LYR family. In terms of assembly, mammalian complex I is composed of 45 different subunits.

It is found in the mitochondrion inner membrane. Functionally, accessory subunit of the mitochondrial membrane respiratory chain NADH dehydrogenase (Complex I), that is believed to be not involved in catalysis. Complex I functions in the transfer of electrons from NADH to the respiratory chain. The immediate electron acceptor for the enzyme is believed to be ubiquinone. The chain is NADH dehydrogenase [ubiquinone] 1 beta subcomplex subunit 9 (NDUFB9) from Pongo abelii (Sumatran orangutan).